We begin with the raw amino-acid sequence, 228 residues long: UPF0758 protein H16_A3033 (228 aa).

Residues 102-224 (GFDGPAAVRN…IRSLADCCDR (123 aa)) enclose the MPN domain. Residues His-173, His-175, and Asp-186 each coordinate Zn(2+). Positions 173–186 (HNHPRGTTAPSQSD) match the JAMM motif motif.

It belongs to the UPF0758 family.

This is UPF0758 protein H16_A3033 from Cupriavidus necator (strain ATCC 17699 / DSM 428 / KCTC 22496 / NCIMB 10442 / H16 / Stanier 337) (Ralstonia eutropha).